We begin with the raw amino-acid sequence, 166 residues long: Small ribosomal subunit protein uS5 (166 aa).

Residues Tyr12–Val75 enclose the S5 DRBM domain.

Belongs to the universal ribosomal protein uS5 family. In terms of assembly, part of the 30S ribosomal subunit. Contacts proteins S4 and S8.

Functionally, with S4 and S12 plays an important role in translational accuracy. In terms of biological role, located at the back of the 30S subunit body where it stabilizes the conformation of the head with respect to the body. In Pseudomonas aeruginosa (strain LESB58), this protein is Small ribosomal subunit protein uS5.